Reading from the N-terminus, the 230-residue chain is C-reactive protein (230 aa).

A signal peptide spans 1–19 (MEKLLWCLLITISFSQAFG). One can recognise a Pentraxin (PTX) domain in the interval 24–223 (SKQAFVFPGV…DVFIKPQLWP (200 aa)). C55 and C114 are oxidised to a cystine. Residue N78 coordinates Ca(2+). An N-linked (GlcNAc...) asparagine glycan is attached at N147. Ca(2+)-binding residues include E155, Q156, D157, and Q167. C227 and C228 are disulfide-bonded.

Belongs to the pentraxin family. Homopentamer; disulfide-linked. Pentraxin (or pentaxin) have a discoid arrangement of 5 non-covalently bound subunits. Two of the five chains form a dimer linked by two interchain disulfide bonds located in the C-terminal heptapeptide and specific to rat CRP. Interacts with FCN1; may regulate monocyte activation by FCN1. Requires Ca(2+) as cofactor. Post-translationally, the last two cysteines are involved either in interchain disulfide bonds or in an intrachain bond. In terms of tissue distribution, found in plasma.

It is found in the secreted. In terms of biological role, displays several functions associated with host defense: it promotes agglutination, bacterial capsular swelling, phagocytosis and complement fixation through its calcium-dependent binding to phosphorylcholine. Can interact with DNA and histones and may scavenge nuclear material released from damaged circulating cells. This Rattus norvegicus (Rat) protein is C-reactive protein (Crp).